Consider the following 182-residue polypeptide: Putative manganese efflux pump MntP (182 aa).

The next 6 membrane-spanning stretches (helical) occupy residues 6–26, 37–57, 71–91, 101–121, 131–151, and 162–182; these read LIPLIIMAFALGMDAFSVSLG, ILYIGMTIGIFHIIMPFIGMV, HFAGAILLIGLGFYIVYSTIL, IGISLFVFAFGVSIDSFSVGL, IITILLFGFVSMLLAWIGLLI, and YGEIVGGIILVGFGLYILFPI.

Belongs to the MntP (TC 9.B.29) family.

The protein resides in the cell membrane. In terms of biological role, probably functions as a manganese efflux pump. The chain is Putative manganese efflux pump MntP from Bacillus cereus (strain B4264).